Here is a 109-residue protein sequence, read N- to C-terminus: Movement protein TGB2 (109 aa).

Over 1–9 the chain is Cytoplasmic; it reads MPLQPPPDH. The chain crosses the membrane as a helical span at residues 10–30; the sequence is TWAVRIIALGLAVTALIFTST. The Lumenal portion of the chain corresponds to 31–71; it reads RDTSRHVGDPSHSLPFGGHYRDGSKVIHYNSPRSSKPSNHT. Residues 72–92 traverse the membrane as a helical segment; that stretch reads PYLLFAPIGIILLIHALHRLG. Over 93–109 the chain is Cytoplasmic; it reads NSAHICRCTHCMPHSQT.

Belongs to the Tymovirales TGBp2 protein family.

The protein localises to the host endoplasmic reticulum membrane. Functionally, plays a role in viral cell-to-cell propagation, by facilitating genome transport to neighboring plant cells through plasmosdesmata,. The polypeptide is Movement protein TGB2 (Citrus (ICRSV)).